A 334-amino-acid polypeptide reads, in one-letter code: Malate dehydrogenase, cytoplasmic (334 aa).

Ser2 bears the N-acetylserine mark. NAD(+) is bound by residues 11–17 (GAAGQIA) and Asp42. Substrate-binding residues include Arg92 and Arg98. Asn105 lines the NAD(+) pocket. Residue Lys110 is modified to N6-succinyllysine. Gln112 contributes to the NAD(+) binding site. N6-acetyllysine is present on residues Lys118 and Lys121. Residue 129 to 131 (VGN) participates in NAD(+) binding. Substrate is bound by residues Asn131 and Arg162. Catalysis depends on His187, which acts as the Proton acceptor. Lys214 is modified (N6-succinyllysine). Residue Ser217 is modified to Phosphoserine. Arg230 is modified (omega-N-methylarginine). At Ser241 the chain carries Phosphoserine. Lys298 is subject to N6-acetyllysine; alternate. Lys298 is modified (N6-succinyllysine; alternate). Ser309 bears the Phosphoserine mark. The residue at position 318 (Lys318) is an N6-succinyllysine. Residues Ser332 and Ser333 each carry the phosphoserine modification.

This sequence belongs to the LDH/MDH superfamily. MDH type 2 family. In terms of assembly, homodimer. In terms of processing, ISGylated. Acetylation at Lys-118 dramatically enhances enzymatic activity and promotes adipogenic differentiation.

The protein localises to the cytoplasm. It is found in the cytosol. It catalyses the reaction (S)-malate + NAD(+) = oxaloacetate + NADH + H(+). It carries out the reaction (2R)-2-hydroxy-3-(4-hydroxyphenyl)propanoate + NAD(+) = 3-(4-hydroxyphenyl)pyruvate + NADH + H(+). The enzyme catalyses (S)-2-hydroxyglutarate + NAD(+) = 2-oxoglutarate + NADH + H(+). Its function is as follows. Catalyzes the reduction of aromatic alpha-keto acids in the presence of NADH. Plays essential roles in the malate-aspartate shuttle and the tricarboxylic acid cycle, important in mitochondrial NADH supply for oxidative phosphorylation. Catalyzes the reduction of 2-oxoglutarate to 2-hydroxyglutarate, leading to elevated reactive oxygen species (ROS). This Homo sapiens (Human) protein is Malate dehydrogenase, cytoplasmic.